The chain runs to 241 residues: Biosynthetic peptidoglycan transglycosylase (241 aa).

Residues 18–38 (GVIGIIALWMAGILIFAFLPV) form a helical membrane-spanning segment.

It belongs to the glycosyltransferase 51 family.

Its subcellular location is the cell inner membrane. It carries out the reaction [GlcNAc-(1-&gt;4)-Mur2Ac(oyl-L-Ala-gamma-D-Glu-L-Lys-D-Ala-D-Ala)](n)-di-trans,octa-cis-undecaprenyl diphosphate + beta-D-GlcNAc-(1-&gt;4)-Mur2Ac(oyl-L-Ala-gamma-D-Glu-L-Lys-D-Ala-D-Ala)-di-trans,octa-cis-undecaprenyl diphosphate = [GlcNAc-(1-&gt;4)-Mur2Ac(oyl-L-Ala-gamma-D-Glu-L-Lys-D-Ala-D-Ala)](n+1)-di-trans,octa-cis-undecaprenyl diphosphate + di-trans,octa-cis-undecaprenyl diphosphate + H(+). It functions in the pathway cell wall biogenesis; peptidoglycan biosynthesis. Peptidoglycan polymerase that catalyzes glycan chain elongation from lipid-linked precursors. The sequence is that of Biosynthetic peptidoglycan transglycosylase from Yersinia pseudotuberculosis serotype O:1b (strain IP 31758).